Here is an 861-residue protein sequence, read N- to C-terminus: Glucans biosynthesis glucosyltransferase H (861 aa).

Disordered stretches follow at residues Arg-65–Arg-89 and Ala-101–Pro-129. Basic and acidic residues-rich tracts occupy residues Ser-67–Thr-76 and Leu-105–Val-114. Transmembrane regions (helical) follow at residues Phe-181–Leu-201, Leu-208–Phe-228, Val-532–Leu-552, Leu-589–Val-609, Gly-616–Ala-636, and Phe-698–Met-718.

It belongs to the glycosyltransferase 2 family. OpgH subfamily.

It is found in the cell inner membrane. It participates in glycan metabolism; osmoregulated periplasmic glucan (OPG) biosynthesis. In terms of biological role, involved in the biosynthesis of osmoregulated periplasmic glucans (OPGs). The polypeptide is Glucans biosynthesis glucosyltransferase H (Cupriavidus pinatubonensis (strain JMP 134 / LMG 1197) (Cupriavidus necator (strain JMP 134))).